Reading from the N-terminus, the 616-residue chain is Dihydroxy-acid dehydratase (616 aa).

Asp-81 is a binding site for Mg(2+). Cys-122 is a [2Fe-2S] cluster binding site. Mg(2+) is bound by residues Asp-123 and Lys-124. Position 124 is an N6-carboxylysine (Lys-124). Position 195 (Cys-195) interacts with [2Fe-2S] cluster. Glu-491 contributes to the Mg(2+) binding site. Catalysis depends on Ser-517, which acts as the Proton acceptor.

Belongs to the IlvD/Edd family. As to quaternary structure, homodimer. It depends on [2Fe-2S] cluster as a cofactor. The cofactor is Mg(2+).

It carries out the reaction (2R)-2,3-dihydroxy-3-methylbutanoate = 3-methyl-2-oxobutanoate + H2O. The catalysed reaction is (2R,3R)-2,3-dihydroxy-3-methylpentanoate = (S)-3-methyl-2-oxopentanoate + H2O. The protein operates within amino-acid biosynthesis; L-isoleucine biosynthesis; L-isoleucine from 2-oxobutanoate: step 3/4. It functions in the pathway amino-acid biosynthesis; L-valine biosynthesis; L-valine from pyruvate: step 3/4. Its function is as follows. Functions in the biosynthesis of branched-chain amino acids. Catalyzes the dehydration of (2R,3R)-2,3-dihydroxy-3-methylpentanoate (2,3-dihydroxy-3-methylvalerate) into 2-oxo-3-methylpentanoate (2-oxo-3-methylvalerate) and of (2R)-2,3-dihydroxy-3-methylbutanoate (2,3-dihydroxyisovalerate) into 2-oxo-3-methylbutanoate (2-oxoisovalerate), the penultimate precursor to L-isoleucine and L-valine, respectively. In Shewanella sediminis (strain HAW-EB3), this protein is Dihydroxy-acid dehydratase.